A 770-amino-acid chain; its full sequence is Signal transducer and activator of transcription 3 (770 aa).

A2 carries the N-acetylalanine modification. K49 and K87 each carry N6-acetyllysine. The short motif at D150–M162 is the Essential for nuclear import element. The SH2 domain maps to W580–L670. An allysine; alternate mark is found at K601, K615, and K631. 3 positions are modified to N6-acetyllysine; alternate: K601, K615, and K631. Y640 is modified (phosphotyrosine; by TYK2). K685 is modified (allysine; alternate). The residue at position 685 (K685) is an N6-acetyllysine; alternate. A Phosphotyrosine modification is found at P704. Y705 is modified (phosphotyrosine; by FER and PTK6). N6-acetyllysine is present on K707. T714 is subject to Phosphothreonine. A Phosphoserine; by DYRK2, NLK, NEK6, IRAK1, RPS6KA5, ZIPK/DAPK3 and PKC/PRKCE modification is found at S727.

Belongs to the transcription factor STAT family. As to quaternary structure, forms a homodimer or a heterodimer with a related family member (at least STAT1). Component of a promoter-binding complex composed of STAT3, NFATC3 and NFATC4; complex formation is enhanced by calcineurin. Interacts with IL31RA, NCOA1, PELP1, SIPAR, SOCS7, STATIP1 and TMF1. Interacts with IL23R in presence of IL23. Interacts (via SH2 domain) with NLK. Interacts with ARL2BP; the interaction is enhanced by LIF and JAK1 expression. Interacts with KPNA4 and KPNA5; KPNA4 may be the primary mediator of nuclear import. Interacts with CAV2; the interaction is increased on insulin-induced tyrosine phosphorylation of CAV2 and leads to STAT3 activation. Interacts with ARL2BP; interaction is enhanced with ARL2. Interacts with NEK6. Binds to CDK9 when activated and nuclear. Interacts with BMX. Interacts with ZIPK/DAPK3. Interacts with PIAS3; the interaction occurs on stimulation by IL6, CNTF or OSM and inhibits the DNA binding activity of STAT3. In prostate cancer cells, interacts with PRKCE and promotes DNA binding activity of STAT3. Interacts with STMN3, antagonizing its microtubule-destabilizing activity. Interacts with the 'Lys-129' acetylated form of BIRC5/survivin. Interacts with FER. Interacts (via SH2 domain) with EIF2AK2/PKR (via the kinase catalytic domain). Interacts with INPP5F; the interaction is independent of STAT3 Tyr-705 phosphorylation status. Interacts with FGFR4. Interacts with OCIAD1. Interacts with OCIAD2. Interacts (unphosphorylated or phosphorylated at Ser-727) with PHB1. Interacts and may form heterodimers with NHLH1. Found in a complex with SLC39A6, SLC39A10 and with the 'Ser-727' phosphorylated form of STAT3 throughout mitosis. Interacts (when phosphorylated at Tyr-705) with CD274/PD-L1; promoting nuclear translocation of CD274/PD-L1. Interacts (when acetylated) with EP300 (via bromo domain); interaction takes place following STAT3 acetylation by EP300 and promotes enhanceosome assembly. Interacts (when acetylated) with BRD2 (via bromo domain); interaction promotes STAT3 recruitment to chromatin and T-helper Th17 cell differentiation. Interacts with FAM220A/SIPAR; the interaction occurs in both the nucleus and the cytoplasm, is enhanced by IL6 and promotes STAT3 dephosphorylation. Interacts in both unphosphorylated and phosphorylated forms with FAM220A but interacts preferentially in the phosphorylated form in the nucleus. Interacts with PTPN2; the interaction is promoted by FAM220A and leads to STAT3 dephosphorylation which negatively regulates STAT3 transcriptional activator activity. (Microbial infection) Interacts with HCV core protein. In terms of assembly, (Microbial infection) Interacts with S.typhimurium SarA. As to quaternary structure, (Microbial infection) Interacts with human cytomegalovirus (HHV-5) immediate early protein IE1; this interaction leads to STAT3 nuclear accumulation and disruption of IL6-induced STAT3 phosphorylation. In terms of processing, tyrosine phosphorylated upon stimulation with EGF. Tyrosine phosphorylated in response to constitutively activated FGFR1, FGFR2, FGFR3 and FGFR4. Activated through tyrosine phosphorylation by BMX. Tyrosine phosphorylated in response to IL6, IL11, LIF, CNTF, KITLG/SCF, CSF1, EGF, PDGF, IFN-alpha, LEP and OSM. Activated KIT promotes phosphorylation on tyrosine residues and subsequent translocation to the nucleus. Phosphorylated on serine upon DNA damage, probably by ATM or ATR. Serine phosphorylation is important for the formation of stable DNA-binding STAT3 homodimers and maximal transcriptional activity. ARL2BP may participate in keeping the phosphorylated state of STAT3 within the nucleus. Upon LPS challenge, phosphorylated within the nucleus by IRAK1. Upon erythropoietin treatment, phosphorylated on Ser-727 by RPS6KA5. Dephosphorylation on tyrosine residues by PTPN2 negatively regulates IL6/interleukin-6 signaling. Phosphorylation at Tyr-705 by PTK6, isoform M2 of PKM (PKM2) or FER leads to an increase of its transcriptional activity. Phosphorylation at Tyr-705 is increased in the presence of calcineurin. Phosphorylation at Tyr-640 by TYK2 negatively regulates transcriptional activity. Acetylated on lysine residues by EP300/p300, promoting its activation. Acetylation at Lys-49 and Lys-87 by EP300/p300 promotes its activation. Acetylation at Lys-87 by EP300/p300 promotes its association with BRD2 and recruitment to chromatin. Deacetylated at Lys-49 and Lys-87 by HDAC1. Acetylation at Lys-685 by EP300/p300 promotes its homodimerization and activation. Deacetylated at Lys-685 by HDAC3. Acetylated on lysine residues by CREBBP. Deacetylation by LOXL3 leads to disrupt STAT3 dimerization and inhibit STAT3 transcription activity. Oxidation of lysine residues to allysine on STAT3 preferentially takes place on lysine residues that are acetylated. Post-translationally, some lysine residues are oxidized to allysine by LOXL3, leading to disrupt STAT3 dimerization and inhibit STAT3 transcription activity. Oxidation of lysine residues to allysine on STAT3 preferentially takes place on lysine residues that are acetylated. In terms of processing, (Microbial infection) Phosphorylated on Tyr-705 in the presence of S.typhimurium SarA. As to expression, heart, brain, placenta, lung, liver, skeletal muscle, kidney and pancreas. Expressed in naive CD4(+) T cells as well as T-helper Th17, Th1 and Th2 cells.

Its subcellular location is the cytoplasm. The protein localises to the nucleus. Functionally, signal transducer and transcription activator that mediates cellular responses to interleukins, KITLG/SCF, LEP and other growth factors. Once activated, recruits coactivators, such as NCOA1 or MED1, to the promoter region of the target gene. May mediate cellular responses to activated FGFR1, FGFR2, FGFR3 and FGFR4. Upon activation of IL6ST/gp130 signaling by interleukin-6 (IL6), binds to the IL6-responsive elements identified in the promoters of various acute-phase protein genes. Activated by IL31 through IL31RA. Acts as a regulator of inflammatory response by regulating differentiation of naive CD4(+) T-cells into T-helper Th17 or regulatory T-cells (Treg): acetylation promotes its transcription activity and cell differentiation while deacetylation and oxidation of lysine residues by LOXL3 inhibits differentiation. Involved in cell cycle regulation by inducing the expression of key genes for the progression from G1 to S phase, such as CCND1. Mediates the effects of LEP on melanocortin production, body energy homeostasis and lactation. May play an apoptotic role by transctivating BIRC5 expression under LEP activation. Cytoplasmic STAT3 represses macroautophagy by inhibiting EIF2AK2/PKR activity. Plays a crucial role in basal beta cell functions, such as regulation of insulin secretion. Following JAK/STAT signaling activation and as part of a complex with NFATC3 and NFATC4, binds to the alpha-beta E4 promoter region of CRYAB and activates transcription in cardiomyocytes. The chain is Signal transducer and activator of transcription 3 from Homo sapiens (Human).